The chain runs to 713 residues: Polyribonucleotide nucleotidyltransferase (713 aa).

Residues D488 and D494 each contribute to the Mg(2+) site. Positions 555–614 constitute a KH domain; it reads PQMEIIKVPTDKIRDVIGSGGKVIRGIVDETGAKVNIDDDGTVQISAMDRKSIDAAIKMI. An S1 motif domain is found at 624-692; it reads GEIYEGKVVS…ERGKVRLSMK (69 aa).

It belongs to the polyribonucleotide nucleotidyltransferase family. Requires Mg(2+) as cofactor.

It localises to the cytoplasm. The catalysed reaction is RNA(n+1) + phosphate = RNA(n) + a ribonucleoside 5'-diphosphate. Involved in mRNA degradation. Catalyzes the phosphorolysis of single-stranded polyribonucleotides processively in the 3'- to 5'-direction. In Hyphomonas neptunium (strain ATCC 15444), this protein is Polyribonucleotide nucleotidyltransferase.